Consider the following 113-residue polypeptide: ATP-dependent Clp protease adapter protein ClpS (113 aa).

This sequence belongs to the ClpS family. In terms of assembly, binds to the N-terminal domain of the chaperone ClpA.

Involved in the modulation of the specificity of the ClpAP-mediated ATP-dependent protein degradation. The polypeptide is ATP-dependent Clp protease adapter protein ClpS (Leptospira biflexa serovar Patoc (strain Patoc 1 / Ames)).